A 246-amino-acid polypeptide reads, in one-letter code: 1-(5-phosphoribosyl)-5-[(5-phosphoribosylamino)methylideneamino] imidazole-4-carboxamide isomerase (246 aa).

Asp-10 functions as the Proton acceptor in the catalytic mechanism. The active-site Proton donor is Asp-135.

This sequence belongs to the HisA/HisF family.

It is found in the cytoplasm. The catalysed reaction is 1-(5-phospho-beta-D-ribosyl)-5-[(5-phospho-beta-D-ribosylamino)methylideneamino]imidazole-4-carboxamide = 5-[(5-phospho-1-deoxy-D-ribulos-1-ylimino)methylamino]-1-(5-phospho-beta-D-ribosyl)imidazole-4-carboxamide. It functions in the pathway amino-acid biosynthesis; L-histidine biosynthesis; L-histidine from 5-phospho-alpha-D-ribose 1-diphosphate: step 4/9. This is 1-(5-phosphoribosyl)-5-[(5-phosphoribosylamino)methylideneamino] imidazole-4-carboxamide isomerase from Methanococcoides burtonii (strain DSM 6242 / NBRC 107633 / OCM 468 / ACE-M).